A 374-amino-acid polypeptide reads, in one-letter code: C-C chemokine receptor type 2 (374 aa).

Topologically, residues 1 to 42 are extracellular; sequence MLSTSRSRFIRNTNESGEEVTTFFDYDYGAPCHKFDVKQIGA. Asparagine 14 is a glycosylation site (N-linked (GlcNAc...) asparagine). Position 26 is a sulfotyrosine (tyrosine 26). A helical transmembrane segment spans residues 43–70; the sequence is QLLPPLYSLVFIFGFVGNMLVVLILINC. Residues 71 to 80 lie on the Cytoplasmic side of the membrane; the sequence is KKLKCLTDIY. Residues 81-100 traverse the membrane as a helical segment; sequence LLNLAISDLLFLITLPLWAH. Residues 101-114 are Extracellular-facing; sequence SAANEWVFGNAMCK. A disulfide bridge connects residues cysteine 113 and cysteine 190. The helical transmembrane segment at 115–136 threads the bilayer; the sequence is LFTGLYHIGYFGGIFFIILLTI. The Cytoplasmic segment spans residues 137–153; sequence DRYLAIVHAVFALKART. Tyrosine 139 carries the post-translational modification Phosphotyrosine; by JAK2. A helical transmembrane segment spans residues 154–178; sequence VTFGVVTSVITWLVAVFASVPGIIF. Residues 179 to 206 are Extracellular-facing; the sequence is TKCQKEDSVYVCGPYFPRGWNNFHTIMR. A helical membrane pass occupies residues 207–226; it reads NILGLVLPLLIMVICYSGIL. The Cytoplasmic segment spans residues 227–243; that stretch reads KTLLRCRNEKKRHRAVR. Residues 244–268 form a helical membrane-spanning segment; the sequence is VIFTIMIVYFLFWTPYNIVILLNTF. Topologically, residues 269-285 are extracellular; that stretch reads QEFFGLSNCESTSQLDQ. A helical membrane pass occupies residues 286–309; that stretch reads ATQVTETLGMTHCCINPIIYAFVG. Residues 310–374 are Cytoplasmic-facing; sequence EKFRSLFHIA…EASLQDKEGA (65 aa). Residues 348-374 form a disordered region; the sequence is QGLLDGRGKGKSIGRAPEASLQDKEGA.

Belongs to the G-protein coupled receptor 1 family. In terms of assembly, interacts with ARRB1. Interacts (via extracellular N-terminal region) with beta-defensin DEFB106A/DEFB106B; this interaction may preferentially require specific tyrosine sulfation on CCR2. Interacts with NUP85; the interaction is required for CCR2 clusters formation on the cell membrane and CCR2 signaling. (Microbial infection) Binds to HIV-1 Tat. In terms of processing, N-glycosylated. Post-translationally, sulfation increases the affinity for both monomeric and dimeric CCL2 with stronger binding to the monomeric form. Binding of sulfated CCR2 to CCL2 promotes conversion of CCL2 from dimer to monomer. In terms of tissue distribution, expressed by monocytes and IL2-activated NK cells. Abundantly expressed on CD14+/CD16- monocytes and weakly on CD14+/CD16+ monocytes, type 2 dendritic cells (DCs) and plasmacytoid DCs (at protein level).

The protein resides in the cell membrane. Key functional receptor for CCL2 but can also bind CCL7, and CCL12. Also transduces signaling mediated by CCL13. Its binding with CCL2 on monocytes and macrophages mediates chemotaxis and migration induction through the activation of the PI3K cascade, the small G protein Rac and lamellipodium protrusion. Also acts as a receptor for the beta-defensin DEFB106A/DEFB106B. Regulates the expression of T-cell inflammatory cytokines and T-cell differentiation, promoting the differentiation of T-cells into T-helper 17 cells (Th17) during inflammation. Facilitates the export of mature thymocytes by enhancing directional movement of thymocytes to sphingosine-1-phosphate stimulation and up-regulation of S1P1R expression; signals through the JAK-STAT pathway to regulate FOXO1 activity leading to an increased expression of S1P1R. Plays an important role in mediating peripheral nerve injury-induced neuropathic pain. Increases NMDA-mediated synaptic transmission in both dopamine D1 and D2 receptor-containing neurons, which may be caused by MAPK/ERK-dependent phosphorylation of GRIN2B/NMDAR2B. Mediates the recruitment of macrophages and monocytes to the injury site following brain injury. Its function is as follows. (Microbial infection) Alternative coreceptor with CD4 for HIV-1 infection. The protein is C-C chemokine receptor type 2 (CCR2) of Homo sapiens (Human).